A 173-amino-acid chain; its full sequence is Large ribosomal subunit protein bL12m (173 aa).

The transit peptide at 1-33 directs the protein to the mitochondrion; that stretch reads MFRIASRQTRNLRALSSSKNWARSLVNTRSFRA.

It belongs to the bacterial ribosomal protein bL12 family. Component of the mitochondrial large ribosomal subunit (mt-LSU). Mature yeast 74S mitochondrial ribosomes consist of a small (37S) and a large (54S) subunit. The 37S small subunit contains a 15S ribosomal RNA (15S mt-rRNA) and at least 32 different proteins. The 54S large subunit contains a 21S rRNA (21S mt-rRNA) and at least 45 different proteins.

The protein localises to the mitochondrion. Functionally, component of the mitochondrial ribosome (mitoribosome), a dedicated translation machinery responsible for the synthesis of mitochondrial genome-encoded proteins, including at least some of the essential transmembrane subunits of the mitochondrial respiratory chain. The mitoribosomes are attached to the mitochondrial inner membrane and translation products are cotranslationally integrated into the membrane. This chain is Large ribosomal subunit protein bL12m (mrpl12), found in Schizosaccharomyces pombe (strain 972 / ATCC 24843) (Fission yeast).